The sequence spans 350 residues: Geranylgeranyl pyrophosphate synthase (350 aa).

Residues Lys66, Arg69, and His98 each contribute to the isopentenyl diphosphate site. Mg(2+) contacts are provided by Asp105 and Asp109. Arg114 is a dimethylallyl diphosphate binding site. Arg115 provides a ligand contact to isopentenyl diphosphate. Dimethylallyl diphosphate contacts are provided by Lys200, Thr201, Gln236, Asn243, and Lys263.

This sequence belongs to the FPP/GGPP synthase family. It depends on Mg(2+) as a cofactor.

It catalyses the reaction isopentenyl diphosphate + dimethylallyl diphosphate = (2E)-geranyl diphosphate + diphosphate. The enzyme catalyses isopentenyl diphosphate + (2E)-geranyl diphosphate = (2E,6E)-farnesyl diphosphate + diphosphate. The catalysed reaction is isopentenyl diphosphate + (2E,6E)-farnesyl diphosphate = (2E,6E,10E)-geranylgeranyl diphosphate + diphosphate. It participates in secondary metabolite biosynthesis; terpenoid biosynthesis. Its function is as follows. Geranylgeranyl pyrophosphate synthase; part of the gene cluster that mediates the biosynthesis of pleuromutilin, a tricyclic diterpene showing antibacterial properties. The geranylgeranyl diphosphate (GGPP) synthase catalyzes the first step in pleuromutilin biosynthesis. GGPP is then substrate of the premutilin synthase (PS) to yield premutilin. Premutilin synthase is a bifunctional enzyme composed of the fusion of a class II diterpene cyclase (DTC) and a class I diterpene synthase (DTS), with the corresponding domains and active sites containing characteristic aspartate-rich motifs. GGPP is first converted to mutildienyl-diphosphate (MPP) at the class II DTC site. MPP is subsequently further cyclized at the class I DTS site, followed by a 1,5-hydride shift and addition of water prior to terminating deprotonation, to yield premutilin. In addition to the aforementioned GGPP synthase and bifunctional diterpene synthase, the cluster also contains three cytochrome P450 monooxygenases, a short-chain alcohol dehydrogenase, and an acyltransferase, involved in the conversion of premutilin to pleuromutilin. The cytochrome P450 monooxygenases P450-1 and P450-2 hydroxylate premutilin at C-11 and C-3, respectively, producing 11-hydroxypremutilin and 3-hydroxypremutilin. The combination of the actions of both ple5 and ple6 leads to the production of 3,11-dihydroxypremutilin. The short chain dehydrogenase SDR further converts 3,11-dihydroxypremutilin into mutilin. The acetyltransferase ATF then acetylates mutilin to produce 14-O-acetylmutilin. Finally, the cytochrome P450 monooxygenase P450-3 catalyzes hydroxylation on the alpha position of the acetyl side chain of 14-O-acetylmutilin to yield pleuromutilin. In Clitopilus passeckerianus (Pleurotus passeckerianus), this protein is Geranylgeranyl pyrophosphate synthase.